The sequence spans 264 residues: uncharacterized protein (264 aa).

13–20 is a binding site for NADP(+); sequence TGSTSGIG. Residue S141 participates in substrate binding. Y154 acts as the Proton acceptor in catalysis.

Belongs to the short-chain dehydrogenases/reductases (SDR) family.

This is an uncharacterized protein from Bacillus subtilis (strain 168).